Consider the following 86-residue polypeptide: YcgL domain-containing protein XC_4086 (86 aa).

One can recognise a YcgL domain in the interval Met1–Cys83.

The sequence is that of YcgL domain-containing protein XC_4086 from Xanthomonas campestris pv. campestris (strain 8004).